The following is a 197-amino-acid chain: LexA repressor (197 aa).

The segment at residues 28-47 (VREIARRFRITPRGALLHLI) is a DNA-binding region (H-T-H motif). Catalysis depends on for autocatalytic cleavage activity residues Ser119 and Lys156.

It belongs to the peptidase S24 family. In terms of assembly, homodimer.

The catalysed reaction is Hydrolysis of Ala-|-Gly bond in repressor LexA.. Its function is as follows. Represses a number of genes involved in the response to DNA damage (SOS response), including recA and lexA. In the presence of single-stranded DNA, RecA interacts with LexA causing an autocatalytic cleavage which disrupts the DNA-binding part of LexA, leading to derepression of the SOS regulon and eventually DNA repair. In Thermotoga sp. (strain RQ2), this protein is LexA repressor.